Here is a 377-residue protein sequence, read N- to C-terminus: Probable aspartic-type endopeptidase CTSD (377 aa).

Residues 1–292 form the Peptidase A1 domain; that stretch reads SLIDTGASRT…DFDKNRVGLA (292 aa). Residue aspartate 4 is part of the active site. An N-linked (GlcNAc...) asparagine glycan is attached at asparagine 58. The active site involves aspartate 186. Positions 296–351 are disordered; sequence YGETKDPPSSSHPPPAPTSNKASGGSPGLPEQSGTSSATTSTTGEPSSGSTASPSA. The span at 328–351 shows a compositional bias: low complexity; that stretch reads SGTSSATTSTTGEPSSGSTASPSA. Residue serine 350 is the site of GPI-anchor amidated serine attachment. The propeptide at 351 to 377 is removed in mature form; that stretch reads AASSVSMSAWLSLAVFLSTASSLILWD.

It belongs to the peptidase A1 family.

It localises to the cell membrane. Its function is as follows. Secreted aspartic-type endopeptidase which is secreted and contributes to virulence. The sequence is that of Probable aspartic-type endopeptidase CTSD (CTSD) from Arthroderma otae (strain ATCC MYA-4605 / CBS 113480) (Microsporum canis).